Consider the following 400-residue polypeptide: Large envelope protein (400 aa).

M1 carries the N-acetylmethionine modification. 2 disordered regions span residues 1–24 (MGGW…PLGF) and 86–114 (TTVP…PLRD). A lipid anchor (N-myristoyl glycine; by host) is attached at G2. The segment at 2 to 119 (GGWSSKPRKG…PPLRDTHPQA (118 aa)) is pre-S1. The interval 2-174 (GGWSSKPRKG…SSKTGDPVPN (173 aa)) is pre-S. Over 2 to 181 (GGWSSKPRKG…VPNMENIASG (180 aa)) the chain is Virion surface; in external conformation. Residues 2–253 (GGWSSKPRKG…PGYRWMCLRR (252 aa)) lie on the Intravirion; in internal conformation side of the membrane. N-linked (GlcNAc...) asparagine glycosylation occurs at W4. The segment covering 96–106 (STNRQSGRQPT) has biased composition (polar residues). Residues 120 to 174 (MQWNSTTFLQTLQDSRVRALYLPAGGSSSGTVSPAQNTVSAISSISSKTGDPVPN) form a pre-S2 region. The helical transmembrane segment at 182–202 (LLGHLLVLQAGFFSLTKILTI) threads the bilayer. At 203 to 253 (PQSLDSWWTSLNFLGGTPACPGQNSQSQISSHSPTCCPPICPGYRWMCLRR) the chain is on the intravirion; in external conformation side. A helical membrane pass occupies residues 254–274 (FIIFLCILLLCLIFLLVLLDY). Residues 275–348 (QGMLPVCPLT…WASVRFSWLS (74 aa)) are Virion surface-facing. A glycan (N-linked (GlcNAc...) asparagine; by host) is linked at N320. The chain crosses the membrane as a helical span at residues 349 to 369 (LLVPFVQWFVGLSPTVWLSVI). The Intravirion portion of the chain corresponds to 370-375 (WMMWFW). Residues 376–398 (GPSLYNILRPFMPLLPTFFCLWV) traverse the membrane as a helical segment. The Virion surface portion of the chain corresponds to 399-400 (YI).

It belongs to the orthohepadnavirus major surface antigen family. As to quaternary structure, interacts (via its myristoylated pre-S1 region) with the host SLC10A1/NTCP; this interaction is essential for viral entry. In its internal form (Li-HBsAg), interacts with the capsid protein and with the isoform S. Interacts with host chaperone CANX. In terms of assembly, associates with host chaperone CANX through its pre-S2 N glycan; this association may be essential for isoform M proper secretion. As to quaternary structure, interacts with isoform L. Interacts with the antigens of satellite virus HDV (HDVAgs); this interaction is required for encapsidation of HDV genomic RNA. In terms of processing, isoform M is N-terminally acetylated by host at a ratio of 90%, and N-glycosylated by host at the pre-S2 region. Myristoylated; this modification is essential for its interaction with the host protein SLC10A1/NTCP.

It is found in the virion membrane. In terms of biological role, the large envelope protein exists in two topological conformations, one which is termed 'external' or Le-HBsAg and the other 'internal' or Li-HBsAg. In its external conformation the protein attaches the virus to cell receptors and thereby initiating infection. This interaction determines the species specificity and liver tropism. This attachment induces virion internalization predominantly through caveolin-mediated endocytosis. The large envelope protein also assures fusion between virion membrane and endosomal membrane. In its internal conformation the protein plays a role in virion morphogenesis and mediates the contact with the nucleocapsid like a matrix protein. The middle envelope protein plays an important role in the budding of the virion. It is involved in the induction of budding in a nucleocapsid independent way. In this process the majority of envelope proteins bud to form subviral lipoprotein particles of 22 nm of diameter that do not contain a nucleocapsid. This chain is Large envelope protein, found in Hepatitis B virus genotype B2 subtype adw (isolate China/patient4/1996) (HBV-B).